We begin with the raw amino-acid sequence, 376 residues long: Glutamate 5-kinase (376 aa).

Lysine 15 lines the ATP pocket. Positions 55, 142, and 154 each coordinate substrate. Residues 174 to 175 and 216 to 222 contribute to the ATP site; these read TD and TGGMATK. The region spanning 281–359 is the PUA domain; that stretch reads AGKVLVDAGA…AEIEQLLGYR (79 aa).

This sequence belongs to the glutamate 5-kinase family.

It localises to the cytoplasm. It catalyses the reaction L-glutamate + ATP = L-glutamyl 5-phosphate + ADP. The protein operates within amino-acid biosynthesis; L-proline biosynthesis; L-glutamate 5-semialdehyde from L-glutamate: step 1/2. In terms of biological role, catalyzes the transfer of a phosphate group to glutamate to form L-glutamate 5-phosphate. This chain is Glutamate 5-kinase, found in Trichlorobacter lovleyi (strain ATCC BAA-1151 / DSM 17278 / SZ) (Geobacter lovleyi).